A 692-amino-acid polypeptide reads, in one-letter code: Small conductance calcium-activated potassium channel-like protein 3 (692 aa).

Residues 270–290 form a helical membrane-spanning segment; the sequence is SLYLALFGVILMLVESEITAE. Residues 313–333 traverse the membrane as a helical segment; it reads TIALLYHIILYHLNDIVLELV. The helical transmembrane segment at 349 to 369 threads the bilayer; sequence VIQFCIEFICCGICPLPGSGE. The helical transmembrane segment at 401–421 threads the bilayer; the sequence is VILSCFMLCRSYLFARFMVLH. Residues 455–475 traverse the membrane as a helical segment; that stretch reads PVLFLTTFTFIFWIIMSWMFV. An intramembrane region (pore-forming) is located at residues 492 to 512; that stretch reads YSNSLWFIAITFMLNGYGDIV. Residues 520–540 form a helical membrane-spanning segment; that stretch reads FIAIFVGVVGAVISSILIAVI. A compositionally biased stretch (polar residues) spans 667-683; sequence HSTPNVPHLQGLTSSPV. Residues 667 to 692 are disordered; sequence HSTPNVPHLQGLTSSPVPSDRYDNRF.

Belongs to the potassium channel KCNN family. SK subfamily. Heterooligomer.

Its subcellular location is the membrane. Functionally, forms a voltage-independent potassium channel activated by intracellular calcium. In Caenorhabditis elegans, this protein is Small conductance calcium-activated potassium channel-like protein 3 (kcnl-3).